The sequence spans 403 residues: Acetyl-CoA acetyltransferase 2 (403 aa).

Catalysis depends on cysteine 97, which acts as the Acyl-thioester intermediate. Lysine 237 is a binding site for CoA. Alanine 254 contacts K(+). Serine 258 contributes to the CoA binding site. Valine 355 is a binding site for K(+). Catalysis depends on proton acceptor residues histidine 359 and cysteine 389.

The protein belongs to the thiolase-like superfamily. Thiolase family. As to expression, expressed in root tips, emerging leaves, young leaves, stems, and anthers at the microspore stage.

Its subcellular location is the cytoplasm. The protein localises to the peroxisome. It catalyses the reaction 2 acetyl-CoA = acetoacetyl-CoA + CoA. The protein operates within metabolic intermediate biosynthesis; (R)-mevalonate biosynthesis; (R)-mevalonate from acetyl-CoA: step 1/3. In terms of biological role, catalyzes the condensation of two molecules of acetyl-CoA to produce acetoacetyl-CoA. Generates the bulk of the acetoacetyl-CoA precursor required for the cytosol-localized, mevalonate-derived isoprenoid biosynthesis. The generated isoprenoids are required for normal growth and development. Essential protein during embryogenesis. This chain is Acetyl-CoA acetyltransferase 2, found in Arabidopsis thaliana (Mouse-ear cress).